Here is a 321-residue protein sequence, read N- to C-terminus: Lipoyl synthase (321 aa).

The [4Fe-4S] cluster site is built by Cys-68, Cys-73, Cys-79, Cys-94, Cys-98, Cys-101, and Ser-308. In terms of domain architecture, Radical SAM core spans 80–297 (FNHGTATFMI…KAEALAMGFT (218 aa)).

Belongs to the radical SAM superfamily. Lipoyl synthase family. [4Fe-4S] cluster is required as a cofactor.

It is found in the cytoplasm. The enzyme catalyses [[Fe-S] cluster scaffold protein carrying a second [4Fe-4S](2+) cluster] + N(6)-octanoyl-L-lysyl-[protein] + 2 oxidized [2Fe-2S]-[ferredoxin] + 2 S-adenosyl-L-methionine + 4 H(+) = [[Fe-S] cluster scaffold protein] + N(6)-[(R)-dihydrolipoyl]-L-lysyl-[protein] + 4 Fe(3+) + 2 hydrogen sulfide + 2 5'-deoxyadenosine + 2 L-methionine + 2 reduced [2Fe-2S]-[ferredoxin]. Its pathway is protein modification; protein lipoylation via endogenous pathway; protein N(6)-(lipoyl)lysine from octanoyl-[acyl-carrier-protein]: step 2/2. Functionally, catalyzes the radical-mediated insertion of two sulfur atoms into the C-6 and C-8 positions of the octanoyl moiety bound to the lipoyl domains of lipoate-dependent enzymes, thereby converting the octanoylated domains into lipoylated derivatives. The protein is Lipoyl synthase of Edwardsiella ictaluri (strain 93-146).